Reading from the N-terminus, the 413-residue chain is Tyrosine--tRNA ligase (413 aa).

The 'HIGH' region motif lies at P59–H68. The 'KMSKS' region motif lies at K243–S247. K246 lines the ATP pocket. Residues L351–L411 form the S4 RNA-binding domain.

Belongs to the class-I aminoacyl-tRNA synthetase family. TyrS type 2 subfamily. In terms of assembly, homodimer.

It is found in the cytoplasm. The catalysed reaction is tRNA(Tyr) + L-tyrosine + ATP = L-tyrosyl-tRNA(Tyr) + AMP + diphosphate + H(+). Functionally, catalyzes the attachment of tyrosine to tRNA(Tyr) in a two-step reaction: tyrosine is first activated by ATP to form Tyr-AMP and then transferred to the acceptor end of tRNA(Tyr). This Burkholderia lata (strain ATCC 17760 / DSM 23089 / LMG 22485 / NCIMB 9086 / R18194 / 383) protein is Tyrosine--tRNA ligase.